Reading from the N-terminus, the 111-residue chain is Cryptic phage CTXphi transcriptional repressor RstR (111 aa).

The HTH cro/C1-type domain occupies isoleucine 6–leucine 60. The H-T-H motif DNA-binding region spans glutamine 17–lysine 36.

Transcriptional repressor of the integrated CTXPhi phage gene rstA2. The polypeptide is Cryptic phage CTXphi transcriptional repressor RstR (rstR) (Vibrio cholerae).